The sequence spans 204 residues: Ubiquitin-conjugating enzyme E2 S (204 aa).

The region spanning 14-160 (QIIKQVAREI…AKMFTEIHAK (147 aa)) is the UBC core domain. Cysteine 98 serves as the catalytic Glycyl thioester intermediate. Polar residues predominate over residues 165–176 (SSNNISEGQQES). The disordered stretch occupies residues 165-204 (SSNNISEGQQESLPGKKRVAVNEKMCDKKKKDKKRALKRL). Over residues 191 to 204 (DKKKKDKKRALKRL) the composition is skewed to basic residues.

This sequence belongs to the ubiquitin-conjugating enzyme family.

It carries out the reaction S-ubiquitinyl-[E1 ubiquitin-activating enzyme]-L-cysteine + [E2 ubiquitin-conjugating enzyme]-L-cysteine = [E1 ubiquitin-activating enzyme]-L-cysteine + S-ubiquitinyl-[E2 ubiquitin-conjugating enzyme]-L-cysteine.. The protein operates within protein modification; protein ubiquitination. Functionally, catalyzes the covalent attachment of ubiquitin to other proteins. Acts as an essential factor of the anaphase promoting complex/cyclosome (APC/C), a cell cycle-regulated ubiquitin ligase that controls progression through mitosis. Acts by specifically elongating polyubiquitin chains initiated by the E2 enzyme UBCH10 on APC/C substrates, enhancing the degradation of APC/C substrates by the proteasome and promoting mitotic exit. This Nematostella vectensis (Starlet sea anemone) protein is Ubiquitin-conjugating enzyme E2 S.